The primary structure comprises 77 residues: Translational regulator CsrA (77 aa).

Belongs to the CsrA/RsmA family. In terms of assembly, homodimer; the beta-strands of each monomer intercalate to form a hydrophobic core, while the alpha-helices form wings that extend away from the core.

It localises to the cytoplasm. In terms of biological role, a translational regulator that binds mRNA to regulate translation initiation and/or mRNA stability. Usually binds in the 5'-UTR at or near the Shine-Dalgarno sequence preventing ribosome-binding, thus repressing translation. Its main target seems to be the major flagellin gene, while its function is anatagonized by FliW. The polypeptide is Translational regulator CsrA (Desulfitobacterium hafniense (strain Y51)).